We begin with the raw amino-acid sequence, 449 residues long: Tol-Pal system protein TolB (449 aa).

Residues 1 to 36 (MDCPNMPLHINRRQMLLSAATAAGALALGPARDAFG) form the signal peptide.

It belongs to the TolB family. In terms of assembly, the Tol-Pal system is composed of five core proteins: the inner membrane proteins TolA, TolQ and TolR, the periplasmic protein TolB and the outer membrane protein Pal. They form a network linking the inner and outer membranes and the peptidoglycan layer.

The protein localises to the periplasm. Part of the Tol-Pal system, which plays a role in outer membrane invagination during cell division and is important for maintaining outer membrane integrity. The sequence is that of Tol-Pal system protein TolB from Rhodopseudomonas palustris (strain HaA2).